The sequence spans 456 residues: Bifunctional protein GlmU (456 aa).

The interval 1 to 229 is pyrophosphorylase; sequence MSNSAMSVVI…LSEVEGVNNR (229 aa). UDP-N-acetyl-alpha-D-glucosamine is bound by residues 11–14, Lys-25, Gln-76, 81–82, 103–105, Gly-140, Glu-154, Asn-169, and Asn-227; these read LAAG, GT, and YGD. Position 105 (Asp-105) interacts with Mg(2+). Asn-227 contacts Mg(2+). Residues 230 to 250 are linker; sequence LQLARLERVYQAEQAEKLLLA. The N-acetyltransferase stretch occupies residues 251 to 456; that stretch reads GVMLRDPARF…QGWQRPVKKK (206 aa). 2 residues coordinate UDP-N-acetyl-alpha-D-glucosamine: Arg-333 and Lys-351. His-363 serves as the catalytic Proton acceptor. 2 residues coordinate UDP-N-acetyl-alpha-D-glucosamine: Tyr-366 and Asn-377. Acetyl-CoA-binding positions include Ala-380, 386–387, Ser-405, Ala-423, and Arg-440; that span reads NY.

The protein in the N-terminal section; belongs to the N-acetylglucosamine-1-phosphate uridyltransferase family. It in the C-terminal section; belongs to the transferase hexapeptide repeat family. As to quaternary structure, homotrimer. Mg(2+) is required as a cofactor.

It is found in the cytoplasm. It carries out the reaction alpha-D-glucosamine 1-phosphate + acetyl-CoA = N-acetyl-alpha-D-glucosamine 1-phosphate + CoA + H(+). The enzyme catalyses N-acetyl-alpha-D-glucosamine 1-phosphate + UTP + H(+) = UDP-N-acetyl-alpha-D-glucosamine + diphosphate. The protein operates within nucleotide-sugar biosynthesis; UDP-N-acetyl-alpha-D-glucosamine biosynthesis; N-acetyl-alpha-D-glucosamine 1-phosphate from alpha-D-glucosamine 6-phosphate (route II): step 2/2. Its pathway is nucleotide-sugar biosynthesis; UDP-N-acetyl-alpha-D-glucosamine biosynthesis; UDP-N-acetyl-alpha-D-glucosamine from N-acetyl-alpha-D-glucosamine 1-phosphate: step 1/1. It participates in bacterial outer membrane biogenesis; LPS lipid A biosynthesis. In terms of biological role, catalyzes the last two sequential reactions in the de novo biosynthetic pathway for UDP-N-acetylglucosamine (UDP-GlcNAc). The C-terminal domain catalyzes the transfer of acetyl group from acetyl coenzyme A to glucosamine-1-phosphate (GlcN-1-P) to produce N-acetylglucosamine-1-phosphate (GlcNAc-1-P), which is converted into UDP-GlcNAc by the transfer of uridine 5-monophosphate (from uridine 5-triphosphate), a reaction catalyzed by the N-terminal domain. The sequence is that of Bifunctional protein GlmU from Klebsiella pneumoniae subsp. pneumoniae (strain ATCC 700721 / MGH 78578).